The primary structure comprises 489 residues: NADH-ubiquinone oxidoreductase chain 2 (489 aa).

13 consecutive transmembrane segments (helical) span residues 9-29 (LFPEIFLINATIILLIYGVVF), 47-67 (LGLLSVLITILLVAVGSPLAV), 80-100 (FTYFCQIFLLLSTASTMVMCL), 114-134 (IVLILLSTCSMLFMISAYDLI), 168-188 (FILGAFSSGILLFGCSMIYGF), 216-236 (IFMGILFIAVGFLFKITAVPF), 248-268 (PTIVTAFFSIAPKISILANML), 280-300 (WQQLFFFCSIASMILGALAAM), 309-329 (LAYSSIGHVGYLLIGFSCGTI), 335-355 (LLIGIFIYVLMTVNVFAIVLA), 376-396 (ILAITLSITMFSYAGIPPLAG), 401-421 (FYLFFAALGCGAYLLALIGVV), and 459-479 (LAITVFFITFFFLYPSPLFLV).

The protein belongs to the complex I subunit 2 family.

It localises to the mitochondrion inner membrane. It carries out the reaction a ubiquinone + NADH + 5 H(+)(in) = a ubiquinol + NAD(+) + 4 H(+)(out). Core subunit of the mitochondrial membrane respiratory chain NADH dehydrogenase (Complex I) that is believed to belong to the minimal assembly required for catalysis. Complex I functions in the transfer of electrons from NADH to the respiratory chain. The immediate electron acceptor for the enzyme is believed to be ubiquinone. This chain is NADH-ubiquinone oxidoreductase chain 2 (ND2), found in Marchantia polymorpha (Common liverwort).